The following is a 953-amino-acid chain: Zinc finger CCCH domain-containing protein 18 (953 aa).

Position 1 is an N-acetylmethionine (methionine 1). Over residues 1–14 (MDVAESPERDPHSP) the composition is skewed to basic and acidic residues. 2 disordered regions span residues 1-222 (MDVA…RPRP) and 391-928 (QYTE…LSRR). Serine 6 carries the phosphoserine modification. Residues 15–26 (EDEEQPQGLSDD) show a composition bias toward acidic residues. Serine 34, serine 46, serine 53, serine 59, serine 67, serine 74, serine 78, serine 83, and serine 95 each carry phosphoserine. Over residues 60-72 (QEEEDNHSDEEDR) the composition is skewed to acidic residues. Acidic residues predominate over residues 97 to 106 (CEEEGDEGEE). Positions 105 to 134 (EEDRTSDLRDEASSVTRELDEHELDYDEEV) form a coiled coil. The span at 107–124 (DRTSDLRDEASSVTRELD) shows a compositional bias: basic and acidic residues. A Phosphothreonine modification is found at threonine 109. Phosphoserine occurs at positions 110 and 118. 2 stretches are compositionally biased toward acidic residues: residues 125–136 (EHELDYDEEVPE) and 143–158 (QEDEAEKAGAEDDEEK). Residues 159 to 168 (GEGTPREEGK) show a composition bias toward basic and acidic residues. Threonine 162 is modified (phosphothreonine). A phosphoserine mark is found at serine 173 and serine 179. Residues 175 to 190 (GEKESLEAAKEKKKED) are compositionally biased toward basic and acidic residues. Residues 191-207 (DDGEIDDGEIDDDDLEE) are compositionally biased toward acidic residues. The span at 208–217 (GEVKDPSDRK) shows a compositional bias: basic and acidic residues. The C3H1-type zinc finger occupies 219-245 (RPRPTCRFFMKGNCTWGMNCRFIHPGV). A compositionally biased stretch (basic and acidic residues) spans 396–482 (EPYHNYRERE…EKEREKEKGK (87 aa)). Positions 399 to 464 (HNYRERERER…RERAKRDEKD (66 aa)) form a coiled coil. Serine 487 is subject to Phosphoserine. Lysine 510 participates in a covalent cross-link: Glycyl lysine isopeptide (Lys-Gly) (interchain with G-Cter in SUMO2). Over residues 510-520 (KRADEWKDPWR) the composition is skewed to basic and acidic residues. Phosphoserine is present on residues serine 532, serine 534, and serine 536. Residues 545 to 606 (SASSASASNS…SRSRSFSSSP (62 aa)) are compositionally biased toward low complexity. Residues lysine 622 and lysine 661 each participate in a glycyl lysine isopeptide (Lys-Gly) (interchain with G-Cter in SUMO2) cross-link. The span at 661–670 (KPGDPREARR) shows a compositional bias: basic and acidic residues. Composition is skewed to low complexity over residues 692 to 725 (GSSYSGSSSRSRSLSVSSVSSVSSATSSSSSAHS) and 736 to 750 (ASPVSSASSRSPAPA). The segment covering 760–774 (KKEDGVKEEKRKRDS) has biased composition (basic and acidic residues). Residue lysine 766 forms a Glycyl lysine isopeptide (Lys-Gly) (interchain with G-Cter in SUMO2) linkage. A compositionally biased stretch (low complexity) spans 778-798 (PPKSAKPPAGGKSSQQPSTPQ). Lysine 814 is modified (N6-acetyllysine). Lysine 817 is covalently cross-linked (Glycyl lysine isopeptide (Lys-Gly) (interchain with G-Cter in SUMO2)). Basic and acidic residues predominate over residues 824–841 (AADKGSRKRYEPSDKDRQ). Phosphoserine occurs at positions 842, 852, 868, 893, and 896. The segment covering 893–906 (SPQSKSSSKVTSVP) has biased composition (low complexity). Lysine 908 participates in a covalent cross-link: Glycyl lysine isopeptide (Lys-Gly) (interchain with G-Cter in SUMO2). A compositionally biased stretch (polar residues) spans 916–925 (STKSGKASTL). Residues 921–950 (KASTLSRREELLKQLKAVEDAIARKRAKIP) are a coiled coil.

As to quaternary structure, interacts with ZFC3H1 in a RNase-insensitive manner.

The protein localises to the nucleus. This chain is Zinc finger CCCH domain-containing protein 18, found in Homo sapiens (Human).